Here is a 118-residue protein sequence, read N- to C-terminus: Developmental pluripotency-associated protein 5A (118 aa).

The KH; atypical domain maps to 24–86; the sequence is PEVFQVQSLV…NNKIRAKWML (63 aa).

This sequence belongs to the KHDC1 family.

It is found in the cytoplasm. Functionally, involved in the maintenance of embryonic stem (ES) cell pluripotency. Dispensable for self-renewal of pluripotent ES cells and establishment of germ cells. Associates with specific target mRNAs. This chain is Developmental pluripotency-associated protein 5A (Dppa5a), found in Mus musculus (Mouse).